We begin with the raw amino-acid sequence, 51 residues long: Large ribosomal subunit protein eL39 (51 aa).

Belongs to the eukaryotic ribosomal protein eL39 family. Part of the 50S ribosomal subunit.

The protein is Large ribosomal subunit protein eL39 of Thermococcus kodakarensis (strain ATCC BAA-918 / JCM 12380 / KOD1) (Pyrococcus kodakaraensis (strain KOD1)).